The sequence spans 642 residues: Chaperone protein DnaK (642 aa).

Residue Thr200 is modified to Phosphothreonine; by autocatalysis. Over residues 600–616 (EAAQQSAGAAGPMPGAP) the composition is skewed to low complexity. Residues 600-642 (EAAQQSAGAAGPMPGAPAEEEPSDGPRKAKGRVVDAEIVDDDK) are disordered. The segment covering 623–634 (DGPRKAKGRVVD) has biased composition (basic and acidic residues).

Belongs to the heat shock protein 70 family.

Functionally, acts as a chaperone. This Akkermansia muciniphila (strain ATCC BAA-835 / DSM 22959 / JCM 33894 / BCRC 81048 / CCUG 64013 / CIP 107961 / Muc) protein is Chaperone protein DnaK.